Consider the following 201-residue polypeptide: High mobility group protein homolog 068R (201 aa).

2 consecutive DNA-binding regions (HMG box) follow at residues 70-138 (PKRN…ELEK) and 143-201 (TPSK…KAAK).

It belongs to the IIV-6 401R family.

The protein localises to the host nucleus. The polypeptide is High mobility group protein homolog 068R (Invertebrate iridescent virus 3 (IIV-3)).